The sequence spans 246 residues: 1-(5-phosphoribosyl)-5-[(5-phosphoribosylamino)methylideneamino] imidazole-4-carboxamide isomerase (246 aa).

D12 serves as the catalytic Proton acceptor. D134 (proton donor) is an active-site residue.

The protein belongs to the HisA/HisF family.

The protein localises to the cytoplasm. The catalysed reaction is 1-(5-phospho-beta-D-ribosyl)-5-[(5-phospho-beta-D-ribosylamino)methylideneamino]imidazole-4-carboxamide = 5-[(5-phospho-1-deoxy-D-ribulos-1-ylimino)methylamino]-1-(5-phospho-beta-D-ribosyl)imidazole-4-carboxamide. It functions in the pathway amino-acid biosynthesis; L-histidine biosynthesis; L-histidine from 5-phospho-alpha-D-ribose 1-diphosphate: step 4/9. The sequence is that of 1-(5-phosphoribosyl)-5-[(5-phosphoribosylamino)methylideneamino] imidazole-4-carboxamide isomerase from Psychrobacter cryohalolentis (strain ATCC BAA-1226 / DSM 17306 / VKM B-2378 / K5).